The sequence spans 363 residues: MSGNTFGKLFTVTTAGESHGPALVAIVDGCPPGLELSLEDLQRDLDRRKPGTSRHTTQRQEPDEVEILSGVFEGRTTGCAIGLLIRNTDQKSKDYSAIKDLFRPAHADYTYHHKYGERDYRGGGRSSARETAMRVAAGAIAKKYLVTQGIIIRGYMSQLGPIEIPFKTWDSVEDNAFFSPDPDKVPELEAYMDQLRRDQDSVGARITVVAEGVKPGLGEPIFDRLDAELAHALMSINAVKGVEIGAGFACVSQRGTEHRDELTPEGFLSNNAGGILGGISSGQPIVAHLALKATSSITTPGRSIDVHGNPVDVITKGRHDPCVGIRATPIAEAMMAIVLMDHLLRNRGQNANVRVSTPVLGQL.

The segment at 44–63 is disordered; sequence DLDRRKPGTSRHTTQRQEPD. Residues Arg-48 and Arg-54 each coordinate NADP(+). FMN-binding positions include 125 to 127, 237 to 238, Gly-277, 292 to 296, and Arg-318; these read RSS, NA, and KATSS.

It belongs to the chorismate synthase family. Homotetramer. FMNH2 serves as cofactor.

It carries out the reaction 5-O-(1-carboxyvinyl)-3-phosphoshikimate = chorismate + phosphate. It participates in metabolic intermediate biosynthesis; chorismate biosynthesis; chorismate from D-erythrose 4-phosphate and phosphoenolpyruvate: step 7/7. Its function is as follows. Catalyzes the anti-1,4-elimination of the C-3 phosphate and the C-6 proR hydrogen from 5-enolpyruvylshikimate-3-phosphate (EPSP) to yield chorismate, which is the branch point compound that serves as the starting substrate for the three terminal pathways of aromatic amino acid biosynthesis. This reaction introduces a second double bond into the aromatic ring system. This Pseudomonas fluorescens (strain SBW25) protein is Chorismate synthase.